Here is a 563-residue protein sequence, read N- to C-terminus: Beta-catenin-like protein 1 (563 aa).

The residue at position 1 (Met-1) is an N-acetylmethionine. Residues 1-81 are disordered; it reads MDVGELLSYQ…EEEEPLDESS (81 aa). The Nuclear localization signal motif lies at 16–33; it reads KRPRDDEEEELKTRRKQT. Residues 34 to 45 are compositionally biased toward basic and acidic residues; that stretch reads GPRERGRYREEE. Over residues 66–78 the composition is skewed to acidic residues; that stretch reads DGEEEEEEEEPLD. HEAT repeat units follow at residues 79 to 129 and 134 to 176; these read ESSV…VVAT and YHLL…TLHE. Lys-91 bears the N6-acetyllysine mark. The short motif at 130-140 is the Nuclear export signal (NES) element; that stretch reads MPDLYHLLVEL. ARM repeat units lie at residues 178–228, 229–273, 274–323, 325–363, and 364–417; these read EEGA…MAEF, RPEM…LQDN, DENR…CLML, SNRE…AMIG, and PEGT…LLRN. Position 389 is a phosphoserine (Ser-389). Residues 476 to 540 are a coiled coil; that stretch reads DMEDEFYLRR…HIIKEYAENI (65 aa). Ser-545 carries the phosphoserine modification.

As to quaternary structure, component of the PRP19-CDC5L splicing complex composed of a core complex comprising a homotetramer of PRPF19, CDC5L, PLRG1 and BCAS2, and at least three less stably associated proteins CTNNBL1, CWC15 and HSPA8. Interacts directly with CWC15 and CDC5L in the complex. Interacts with AICDA; the interaction is important for the antibody diversification activity of AICDA. Interacts with PRPF31 (via its NLS). Interacts (via its N-terminal NLS) with KPNA1 and KPNA2.

It localises to the nucleus. In terms of biological role, component of the PRP19-CDC5L complex that forms an integral part of the spliceosome and is required for activating pre-mRNA splicing. Participates in AID/AICDA-mediated somatic hypermutation (SHM) and class-switch recombination (CSR), 2 processes resulting in the production of high-affinity, mutated isotype-switched antibodies. The polypeptide is Beta-catenin-like protein 1 (Ctnnbl1) (Mus musculus (Mouse)).